The primary structure comprises 351 residues: DNA-directed RNA polymerase subunit alpha (351 aa).

Residues 1-245 form an alpha N-terminal domain (alpha-NTD) region; that stretch reads MPRRNLLKGF…EHFTVFVNFD (245 aa). The segment at 261 to 351 is alpha C-terminal domain (alpha-CTD); the sequence is AVLELLNTKI…MRQKEEIDEA (91 aa).

This sequence belongs to the RNA polymerase alpha chain family. As to quaternary structure, homodimer. The RNAP catalytic core consists of 2 alpha, 1 beta, 1 beta' and 1 omega subunit. When a sigma factor is associated with the core the holoenzyme is formed, which can initiate transcription.

It carries out the reaction RNA(n) + a ribonucleoside 5'-triphosphate = RNA(n+1) + diphosphate. In terms of biological role, DNA-dependent RNA polymerase catalyzes the transcription of DNA into RNA using the four ribonucleoside triphosphates as substrates. This is DNA-directed RNA polymerase subunit alpha from Treponema pallidum (strain Nichols).